A 190-amino-acid polypeptide reads, in one-letter code: Abscisic acid receptor PYL2 (190 aa).

Residues 28 to 182 (FEPDPTTCTS…NLQKLGVAAT (155 aa)) are START-like. Residues Lys64, 93-98 (ASTSTE), 120-126 (RLKNYKS), and Glu147 contribute to the abscisate site. The short motif at 89-93 (SGLPA) is the Gate loop element. The short motif at 119–121 (HRL) is the Latch loop element.

This sequence belongs to the PYR/PYL/RCAR abscisic acid intracellular receptor family. In terms of assembly, homodimer. Binds ABA on one subunit only. Interacts with HAB1, ABI1 and ABI2, and possibly with other PP2Cs. Binds to CARs protein in an ABA-independent manner, both at the plasma membrane and in the nucleus.

The protein localises to the cytoplasm. The protein resides in the nucleus. It localises to the cell membrane. Its function is as follows. Receptor for abscisic acid (ABA) required for ABA-mediated responses such as stomatal closure and germination inhibition. Inhibits the activity of group-A protein phosphatases type 2C (PP2Cs) when activated by ABA. Can be activated by both (-)-ABA and (+)-ABA. This is Abscisic acid receptor PYL2 (PYL2) from Arabidopsis thaliana (Mouse-ear cress).